The chain runs to 397 residues: Riboflavin biosynthesis protein RibBA (397 aa).

The interval 1–199 is DHBP synthase; that stretch reads MFHRIEEALE…IEDLIAYRRH (199 aa). D-ribulose 5-phosphate contacts are provided by residues 26–27, D31, 138–142, and E162; these read RE and RAGHT. Residue E27 participates in Mg(2+) binding. H141 is a Mg(2+) binding site. Positions 200-397 are GTP cyclohydrolase II; that stretch reads HETLVTREVE…VNKLGHLLNL (198 aa). 250-254 serves as a coordination point for GTP; that stretch reads RVHSE. C255, C266, and C268 together coordinate Zn(2+). GTP contacts are provided by residues Q271, 293–295, and T315; that span reads EGR. The active-site Proton acceptor; for GTP cyclohydrolase activity is D327. The active-site Nucleophile; for GTP cyclohydrolase activity is the R329. Residues T350 and K355 each contribute to the GTP site.

The protein in the N-terminal section; belongs to the DHBP synthase family. It in the C-terminal section; belongs to the GTP cyclohydrolase II family. It depends on Mg(2+) as a cofactor. The cofactor is Mn(2+). Zn(2+) is required as a cofactor.

The enzyme catalyses D-ribulose 5-phosphate = (2S)-2-hydroxy-3-oxobutyl phosphate + formate + H(+). It catalyses the reaction GTP + 4 H2O = 2,5-diamino-6-hydroxy-4-(5-phosphoribosylamino)-pyrimidine + formate + 2 phosphate + 3 H(+). It participates in cofactor biosynthesis; riboflavin biosynthesis; 2-hydroxy-3-oxobutyl phosphate from D-ribulose 5-phosphate: step 1/1. It functions in the pathway cofactor biosynthesis; riboflavin biosynthesis; 5-amino-6-(D-ribitylamino)uracil from GTP: step 1/4. Functionally, catalyzes the conversion of D-ribulose 5-phosphate to formate and 3,4-dihydroxy-2-butanone 4-phosphate. In terms of biological role, catalyzes the conversion of GTP to 2,5-diamino-6-ribosylamino-4(3H)-pyrimidinone 5'-phosphate (DARP), formate and pyrophosphate. This chain is Riboflavin biosynthesis protein RibBA, found in Bacillus cereus (strain B4264).